A 217-amino-acid chain; its full sequence is Cytokinin riboside 5'-monophosphate phosphoribohydrolase LOG7 (217 aa).

Residues Glu79, 97–98, 114–120, and Thr126 each bind substrate; these read RK and GYGTLEE.

This sequence belongs to the LOG family. As to expression, expressed in roots and shoots. Detected in the epidermis of the root elongation zone, cotyledon and leaves, in trichomes and pollen.

It is found in the cytoplasm. Its subcellular location is the nucleus. It catalyses the reaction N(6)-(dimethylallyl)adenosine 5'-phosphate + H2O = N(6)-dimethylallyladenine + D-ribose 5-phosphate. It carries out the reaction 9-ribosyl-trans-zeatin 5'-phosphate + H2O = trans-zeatin + D-ribose 5-phosphate. Functionally, cytokinin-activating enzyme working in the direct activation pathway. Phosphoribohydrolase that converts inactive cytokinin nucleotides to the biologically active free-base forms. This Arabidopsis thaliana (Mouse-ear cress) protein is Cytokinin riboside 5'-monophosphate phosphoribohydrolase LOG7 (LOG7).